The chain runs to 732 residues: Prolyl tripeptidyl peptidase (732 aa).

An N-terminal signal peptide occupies residues Met1–Ala24. Catalysis depends on charge relay system residues Ser603, Asp678, and His710.

It belongs to the peptidase S9B family.

The catalysed reaction is Hydrolysis of Xaa-Xaa-Pro-|-Yaa- releasing the N-terminal tripeptide of a peptide with Pro as the third residue (position P1) and where Yaa is not proline.. Functionally, serine proteinase. Releases tripeptides from the free amino terminus of proteins. Has a requirement for Pro in the P1 position, but is inactivated by Pro in the P1' position. This chain is Prolyl tripeptidyl peptidase, found in Porphyromonas gingivalis (strain ATCC 33277 / DSM 20709 / CIP 103683 / JCM 12257 / NCTC 11834 / 2561).